Reading from the N-terminus, the 148-residue chain is Cytochrome c oxidase subunit 6, mitochondrial (148 aa).

A mitochondrion-targeting transit peptide spans 1-40 (MASFFRTAVRGPSAGLFRAVARPQPIAARVSLFSTSSRFR).

Belongs to the cytochrome c oxidase subunit 5A family. In terms of assembly, component of the cytochrome c oxidase (complex IV, CIV), a multisubunit enzyme composed of 11 subunits. The complex is composed of a catalytic core of 3 subunits Cox1, Cox2 and Cox3, encoded in the mitochondrial DNA, and 8 supernumerary subunits Cox4, Cox5a/Cox5, Cox6, Cox7, Cox8, Cox7a/Cox9, Cox6b/Cox12 and Cox6a/Cox13, which are encoded in the nuclear genome. The complex exists as a monomer or a dimer and forms respiratory supercomplexes (SCs) in the inner mitochondrial membrane with NADH-ubiquinone oxidoreductase (complex I, CI) and ubiquinol-cytochrome c oxidoreductase (cytochrome b-c1 complex, complex III, CIII), resulting in various different assemblies (supercomplexes I(1)IV(1), I(1)III(3)IV(2), III(2)IV(1) and III(2)IV(2) as well as larger supercomplexes of compositions like I(1)III(2)IV(5-6)).

The protein localises to the mitochondrion inner membrane. It functions in the pathway energy metabolism; oxidative phosphorylation. Its function is as follows. Component of the cytochrome c oxidase, the last enzyme in the mitochondrial electron transport chain which drives oxidative phosphorylation. The respiratory chain contains 3 multisubunit complexes succinate dehydrogenase (complex II, CII), ubiquinol-cytochrome c oxidoreductase (cytochrome b-c1 complex, complex III, CIII) and cytochrome c oxidase (complex IV, CIV), that cooperate to transfer electrons derived from NADH and succinate to molecular oxygen, creating an electrochemical gradient over the inner membrane that drives transmembrane transport and the ATP synthase. Cytochrome c oxidase is the component of the respiratory chain that catalyzes the reduction of oxygen to water. Electrons originating from reduced cytochrome c in the intermembrane space (IMS) are transferred via the dinuclear copper A center (CU(A)) of Cox2 and heme A of Cox1 to the active site in Cox1, a binuclear center (BNC) formed by heme A3 and copper B (CU(B)). The BNC reduces molecular oxygen to 2 water molecules using 4 electrons from cytochrome c in the IMS and 4 protons from the mitochondrial matrix. This chain is Cytochrome c oxidase subunit 6, mitochondrial (cox-6), found in Neurospora crassa (strain ATCC 24698 / 74-OR23-1A / CBS 708.71 / DSM 1257 / FGSC 987).